A 101-amino-acid chain; its full sequence is NADH-quinone oxidoreductase subunit K (101 aa).

3 helical membrane passes run 4 to 24, 30 to 50, and 61 to 81; these read LSHY…GIFL, IVLL…FIAF, and IFVF…LAIL.

Belongs to the complex I subunit 4L family. NDH-1 is composed of 14 different subunits. Subunits NuoA, H, J, K, L, M, N constitute the membrane sector of the complex.

The protein resides in the cell inner membrane. The catalysed reaction is a quinone + NADH + 5 H(+)(in) = a quinol + NAD(+) + 4 H(+)(out). Its function is as follows. NDH-1 shuttles electrons from NADH, via FMN and iron-sulfur (Fe-S) centers, to quinones in the respiratory chain. The immediate electron acceptor for the enzyme in this species is believed to be ubiquinone. Couples the redox reaction to proton translocation (for every two electrons transferred, four hydrogen ions are translocated across the cytoplasmic membrane), and thus conserves the redox energy in a proton gradient. In Aromatoleum aromaticum (strain DSM 19018 / LMG 30748 / EbN1) (Azoarcus sp. (strain EbN1)), this protein is NADH-quinone oxidoreductase subunit K.